Here is a 189-residue protein sequence, read N- to C-terminus: Elongation factor P 2 (189 aa).

It belongs to the elongation factor P family.

It is found in the cytoplasm. Its pathway is protein biosynthesis; polypeptide chain elongation. Its function is as follows. Involved in peptide bond synthesis. Stimulates efficient translation and peptide-bond synthesis on native or reconstituted 70S ribosomes in vitro. Probably functions indirectly by altering the affinity of the ribosome for aminoacyl-tRNA, thus increasing their reactivity as acceptors for peptidyl transferase. The polypeptide is Elongation factor P 2 (efp2) (Lactobacillus johnsonii (strain CNCM I-12250 / La1 / NCC 533)).